The primary structure comprises 320 residues: 3-hydroxybenzoate 6-hydroxylase 2 (320 aa).

The tract at residues 1–25 (MRSTNTRSARSRPTKRSVNASATPT) is disordered. Residues 16–25 (RSVNASATPT) show a composition bias toward polar residues.

This sequence belongs to the 3-hydroxybenzoate 6-hydroxylase family. FAD serves as cofactor.

It catalyses the reaction 3-hydroxybenzoate + NADH + O2 + H(+) = 2,5-dihydroxybenzoate + NAD(+) + H2O. Its function is as follows. Catalyzes the conversion of 3-hydroxybenzoate to gentisate. This is 3-hydroxybenzoate 6-hydroxylase 2 (hbzD) from Aquipseudomonas alcaligenes (Pseudomonas alcaligenes).